The chain runs to 89 residues: MTLDTAEKQKLIESHQVHATDTGSVEVQVAMLSERISKLSDHLQGNIHDYASRQGLLKMIGKRKRLLSYIKGKNPQNYQDLIKKIGIRG.

Belongs to the universal ribosomal protein uS15 family. In terms of assembly, part of the 30S ribosomal subunit. Forms a bridge to the 50S subunit in the 70S ribosome, contacting the 23S rRNA.

Its function is as follows. One of the primary rRNA binding proteins, it binds directly to 16S rRNA where it helps nucleate assembly of the platform of the 30S subunit by binding and bridging several RNA helices of the 16S rRNA. In terms of biological role, forms an intersubunit bridge (bridge B4) with the 23S rRNA of the 50S subunit in the ribosome. The chain is Small ribosomal subunit protein uS15 from Prochlorococcus marinus subsp. pastoris (strain CCMP1986 / NIES-2087 / MED4).